The sequence spans 213 residues: Probable 26S proteasome regulatory subunit p27 (213 aa).

Residues 1–82 adopt a coiled-coil conformation; the sequence is MDEFKQLDLK…IKKVLEKVFS (82 aa). Positions 120 to 184 constitute a PDZ domain; it reads SKILGRVKPF…TLDVLLIRGY (65 aa).

The protein resides in the cytoplasm. The protein localises to the nucleus. In terms of biological role, acts as a chaperone during the assembly of the 26S proteasome, specifically of the base subcomplex of the 19S regulatory complex (RC). The protein is Probable 26S proteasome regulatory subunit p27 (nas2) of Schizosaccharomyces pombe (strain 972 / ATCC 24843) (Fission yeast).